Consider the following 386-residue polypeptide: Nucleosome assembly protein 1-like 4 (386 aa).

A disordered region spans residues 1–29; sequence MADNSFSDGVPSDSLEAAKNASNTEKLTD. N-acetylalanine is present on Ala2. A phosphoserine mark is found at Ser5, Ser7, and Ser12. Residues 20 to 29 show a composition bias toward polar residues; sequence NASNTEKLTD. A Phosphoserine modification is found at Ser49. Thr51 carries the post-translational modification Phosphothreonine. A phosphoserine mark is found at Ser53 and Ser54. Thr58 carries the post-translational modification Phosphothreonine. An N6-acetyllysine modification is found at Lys105. Phosphoserine is present on Ser125. At Lys146 the chain carries N6-acetyllysine. The Nuclear localization signal signature appears at 265-271; it reads IKKKQKH. Residue Ser304 is modified to Phosphoserine. Positions 339–370 are enriched in acidic residues; sequence AIEDDDNFEEGEEGEEEELEGDEEAEDDDDAE. The interval 339-386 is disordered; it reads AIEDDDNFEEGEEGEEEELEGDEEAEDDDDAEINPKKEPSQPSECKQQ.

Belongs to the nucleosome assembly protein (NAP) family. As to quaternary structure, interacts with core (H2A, H2B, H3, H4) and linker (H1) histones. In terms of processing, polyglutamylated and polyglycylated. These 2 modifications occur exclusively on glutamate residues and result in either polyglutamate or polyglycine chains on the gamma-carboxyl group. Both modifications can coexist on the same protein on adjacent residues, and lowering polyglycylation levels increases polyglutamylation, and reciprocally. Polyglutamylated by TTLL4. Phosphorylated at the G0/G1 boundary but it is not phosphorylated in S-phase. Phosphorylated protein remains in the cytoplasm in a complex with histones during the G0/G1 transition, whereas dephosphorylation triggers its transport into the nucleus at the G1/S-boundary.

Its subcellular location is the nucleus. It localises to the cytoplasm. Acts as a histone chaperone in nucleosome assembly. The sequence is that of Nucleosome assembly protein 1-like 4 (NAP1L4) from Bos taurus (Bovine).